The following is a 217-amino-acid chain: MSSVAVIDYGMGNLHSIAKALQHADANAAVTVTSDPDVILASDRVVFPGVGAMRDCMAHLAERRLEQVVRRAAAEKPFLGICLGMQALLEESEENGGTRCLGLITGRVLRFPEGLTGAAGEPLKIPHMGWNRVHFSDPSHPLWAGIPAESWFYFVHSYYAAPADPADVAATSDYPTPFAAAVARGKVFAVQFHPEKSQAAGLRLLANFLRWEPWSSR.

In terms of domain architecture, Glutamine amidotransferase type-1 spans 3–217; sequence SVAVIDYGMG…FLRWEPWSSR (215 aa). The active-site Nucleophile is the cysteine 82. Active-site residues include histidine 193 and glutamate 195.

Heterodimer of HisH and HisF.

The protein localises to the cytoplasm. The enzyme catalyses 5-[(5-phospho-1-deoxy-D-ribulos-1-ylimino)methylamino]-1-(5-phospho-beta-D-ribosyl)imidazole-4-carboxamide + L-glutamine = D-erythro-1-(imidazol-4-yl)glycerol 3-phosphate + 5-amino-1-(5-phospho-beta-D-ribosyl)imidazole-4-carboxamide + L-glutamate + H(+). The catalysed reaction is L-glutamine + H2O = L-glutamate + NH4(+). It participates in amino-acid biosynthesis; L-histidine biosynthesis; L-histidine from 5-phospho-alpha-D-ribose 1-diphosphate: step 5/9. IGPS catalyzes the conversion of PRFAR and glutamine to IGP, AICAR and glutamate. The HisH subunit catalyzes the hydrolysis of glutamine to glutamate and ammonia as part of the synthesis of IGP and AICAR. The resulting ammonia molecule is channeled to the active site of HisF. In Methylococcus capsulatus (strain ATCC 33009 / NCIMB 11132 / Bath), this protein is Imidazole glycerol phosphate synthase subunit HisH.